Here is an 821-residue protein sequence, read N- to C-terminus: Cell wall integrity transcriptional regulator CAS5 (821 aa).

Disordered regions lie at residues 42-66 (HLQSLQQQSQVQSQAPQQVQSLNQH), 219-245 (FESPQSHIQSQPSYSQGYHNQNSLSTP), 305-432 (TKSN…STSQ), 544-576 (QEEEQEHQDEQMEIDSFESNEKNARPTLSTSSL), and 607-750 (VKQE…KHKC). The segment covering 222–245 (PQSHIQSQPSYSQGYHNQNSLSTP) has biased composition (polar residues). Low complexity predominate over residues 305–318 (TKSNSTSSYNSTLN). The span at 319 to 329 (PFYTPSQQLSS) shows a compositional bias: polar residues. Basic residues predominate over residues 372–387 (QLRKAKSYTSLLRKKK). Positions 396 to 412 (QNQQHQQQQQQQQQQQQ) are enriched in low complexity. The span at 422 to 432 (QNLSFPNSTSQ) shows a compositional bias: polar residues. Acidic residues predominate over residues 545–561 (EEEQEHQDEQMEIDSFE). 2 stretches are compositionally biased toward low complexity: residues 662 to 674 (LVNKGNKTNNNDT) and 684 to 693 (KNTNGNGNND). Acidic residues predominate over residues 694–714 (NDNDSEENNDNVDDADDDDDG). 2 C2H2-type zinc fingers span residues 748 to 770 (HKCPICESRFQRPEHVKRHLKSH) and 776 to 801 (FECQMPNCGKRFNRKDNLKAHLKKIH). A Phosphoserine modification is found at serine 769.

Post-translationally, phosphorylation at Ser-769 and probably additional serine residues. GLC7 dephosphorylates CAS5 in response to cell wall stress which leads to its translocation to the nucleus.

Its subcellular location is the nucleus. It is found in the cytoplasm. Functionally, transcription factor that acts with ADA2 to promote cell wall integrity. Regulates the expression of target genes in concert with the transcriptional regulators SWI4 and SWI6. Crucial for proper cell cycle dynamics and responses to echinocandins, which inhibit beta-1,3-glucan synthesis. Has distinct transcriptional targets under basal and stress conditions. Also regulates a transcriptional network that influences the response to fluconazole. Plays a key role in adherence, hyphal development, and virulence. Acts as a repressor of hypha-specific genes during yeast-form growth. The polypeptide is Cell wall integrity transcriptional regulator CAS5 (Candida albicans (strain SC5314 / ATCC MYA-2876) (Yeast)).